The sequence spans 563 residues: Calnexin homolog (563 aa).

A signal peptide spans 1-23; sequence MRFNAAITGALVSSATLMGQAHA. Residues 24–493 are Lumenal-facing; that stretch reads EETEKKADAT…PINAVKQVPE (470 aa). Aspartate 98 is a binding site for Ca(2+). Cysteine 141 and cysteine 175 are disulfide-bonded. 4 residues coordinate an alpha-D-glucoside: tyrosine 145, lysine 147, tyrosine 166, and aspartate 173. Asparagine 236 carries N-linked (GlcNAc...) asparagine glycosylation. The segment at 241-323 is disordered; the sequence is EDFAPPVNPE…EKPEDWDDEE (83 aa). Basic and acidic residues predominate over residues 249 to 279; that stretch reads PEKEIDDPKDKKPADWVDEAKIPDPEAKKPD. Positions 253–386 are p domain (Extended arm); sequence IDDPKDKKPA…RKIPNPAYFE (134 aa). Over residues 280–305 the composition is skewed to acidic residues; the sequence is DWDEDAPYEIVDEEATMPEDWLEDEP. The cysteines at positions 337 and 343 are disulfide-linked. Glutamate 402 lines the an alpha-D-glucoside pocket. Aspartate 413 contributes to the Ca(2+) binding site. The helical transmembrane segment at 494-514 threads the bilayer; the sequence is VAGGLGALLLTMILVIVGAVG. The Cytoplasmic portion of the chain corresponds to 515-563; sequence ASSPAPAAAAKKGKEAASAAKEKASEAVSSAADTAKGAATKRNTRSSAQ. Residues 521 to 563 are disordered; sequence AAAAKKGKEAASAAKEKASEAVSSAADTAKGAATKRNTRSSAQ. Positions 526 to 539 are enriched in basic and acidic residues; that stretch reads KGKEAASAAKEKAS.

This sequence belongs to the calreticulin family.

Its subcellular location is the endoplasmic reticulum membrane. In terms of biological role, interacts with newly synthesized monoglucosylated glycoproteins in the endoplasmic reticulum. It may act in assisting protein assembly and/or in the retention within the ER of unassembled protein subunits. It seems to play a major role in the quality control apparatus of the ER by the retention of incorrectly folded proteins. In Aspergillus fumigatus (strain ATCC MYA-4609 / CBS 101355 / FGSC A1100 / Af293) (Neosartorya fumigata), this protein is Calnexin homolog.